Reading from the N-terminus, the 307-residue chain is Protoheme IX farnesyltransferase (307 aa).

The next 8 membrane-spanning stretches (helical) occupy residues 32–52 (MGIVNSNTLTVFTGFWLALHF), 65–85 (FFTIVGSGLVMAGVCCLNNYI), 108–128 (PGFALTFGLVILLLGFVFLLL), 131–151 (PMAVLMGFIGAFTYVVLYSLW), 158–178 (LNTVVGSISGAVPPLIGWAAI), 186–206 (IAWMLFLIMFIWQIPHFLALA), 251–271 (LGITFMVIATLLNIGWIVLGF), and 287–307 (FVYSLNYLTILFVSMIVVTFF).

The protein belongs to the UbiA prenyltransferase family. Protoheme IX farnesyltransferase subfamily. Interacts with CtaA.

The protein resides in the cell membrane. It carries out the reaction heme b + (2E,6E)-farnesyl diphosphate + H2O = Fe(II)-heme o + diphosphate. The protein operates within porphyrin-containing compound metabolism; heme O biosynthesis; heme O from protoheme: step 1/1. Converts heme B (protoheme IX) to heme O by substitution of the vinyl group on carbon 2 of heme B porphyrin ring with a hydroxyethyl farnesyl side group. This chain is Protoheme IX farnesyltransferase, found in Bacillus cereus (strain ATCC 10987 / NRS 248).